The chain runs to 270 residues: MPELPEVETTRRGIAPHLEGQKVSRVIVRDRRLRWPIPEDLDVRLSGQRIVLVERRAKYLLINAEVGTLISHLGMSGNLRLVEVGLPAAKHEHVDIELESGLALRYTDPRRFGAMLWSHDPLNHELLVRLGPEPLTDLFDGERLYQLSRGRSMAVKPFIMDNAVVVGVGNIYATEALFAAGIDPRREAKGISRARYLKLAIEIKRILAAAIERGGTTLRDFIGGDGQPGYFQQELFVYGRGGENCKVCGTGLREIKLGQRASVYCPRCQS.

P2 (schiff-base intermediate with DNA) is an active-site residue. The active-site Proton donor is the E3. Residue K58 is the Proton donor; for beta-elimination activity of the active site. DNA is bound by residues H91, R110, and R151. The FPG-type zinc finger occupies F236 to S270. Residue R260 is the Proton donor; for delta-elimination activity of the active site.

Belongs to the FPG family. As to quaternary structure, monomer. It depends on Zn(2+) as a cofactor.

The enzyme catalyses Hydrolysis of DNA containing ring-opened 7-methylguanine residues, releasing 2,6-diamino-4-hydroxy-5-(N-methyl)formamidopyrimidine.. It carries out the reaction 2'-deoxyribonucleotide-(2'-deoxyribose 5'-phosphate)-2'-deoxyribonucleotide-DNA = a 3'-end 2'-deoxyribonucleotide-(2,3-dehydro-2,3-deoxyribose 5'-phosphate)-DNA + a 5'-end 5'-phospho-2'-deoxyribonucleoside-DNA + H(+). Functionally, involved in base excision repair of DNA damaged by oxidation or by mutagenic agents. Acts as a DNA glycosylase that recognizes and removes damaged bases. Has a preference for oxidized purines, such as 7,8-dihydro-8-oxoguanine (8-oxoG). Has AP (apurinic/apyrimidinic) lyase activity and introduces nicks in the DNA strand. Cleaves the DNA backbone by beta-delta elimination to generate a single-strand break at the site of the removed base with both 3'- and 5'-phosphates. This is Formamidopyrimidine-DNA glycosylase from Pseudomonas fluorescens (strain ATCC BAA-477 / NRRL B-23932 / Pf-5).